A 352-amino-acid polypeptide reads, in one-letter code: Very-long-chain 3-oxoacyl-CoA reductase (352 aa).

A helical transmembrane segment spans residues 20–40 (TLWFIFIFGLLKLVPFALRFL). 7 residues coordinate NADP(+): V66, D120, N147, Y228, K232, V261, and S263. Y228 functions as the Proton donor in the catalytic mechanism. K232 functions as the Lowers pKa of active site Tyr in the catalytic mechanism.

Belongs to the short-chain dehydrogenases/reductases (SDR) family.

The protein resides in the endoplasmic reticulum membrane. The catalysed reaction is a very-long-chain (3R)-3-hydroxyacyl-CoA + NADP(+) = a very-long-chain 3-oxoacyl-CoA + NADPH + H(+). Its pathway is lipid metabolism; fatty acid biosynthesis. In terms of biological role, component of the microsomal membrane bound fatty acid elongation system, which produces the 26-carbon very long-chain fatty acids (VLCFA) from palmitate. Catalyzes the reduction of the 3-ketoacyl-CoA intermediate that is formed in each cycle of fatty acid elongation. VLCFAs serve as precursors for ceramide and sphingolipids. The protein is Very-long-chain 3-oxoacyl-CoA reductase of Candida glabrata (strain ATCC 2001 / BCRC 20586 / JCM 3761 / NBRC 0622 / NRRL Y-65 / CBS 138) (Yeast).